The primary structure comprises 450 residues: MLVPPVSMIMYHELPSIKNKKREKIPEGTLCVVCSDFASGIHYSVASCNGCKTFFRRALVNKQTFTCQFSGDCVVGKSVRCVCRSCRLKKCFDMGMDPKAIQHDRDKIRYTKALKKKREEEKRLKEMVIKEDIGSPQSIASDTYINTSTPSSSTMINILENDHHSYDPEAQNDVKAVIEDLLRLESRVKSLRNSYRFESQVSATSCMYSSCLLDDITYMAENTHENEGTIEPFECSVEKLREWFVRDLSLMLEWGKCLPIMERLLLNDKLALMKAFAPIFPLIQLAFYTRNEFECDIVIKLEPDCTPKPIPERLNYPDGSFIEKGNKPANTWEEMHTMLIDGCYKMMRQLKIKESTFVLYKMLLFHNPDADGLSSLGKKTIENERMRLLTQLFSYLSTERGKEAQTIFSNLLMMSATLSKTASFIKRVFDFNHIFNRTNDLIDQLIIVGL.

Positions 28 to 103 (GTLCVVCSDF…MGMDPKAIQH (76 aa)) form a DNA-binding region, nuclear receptor. 2 consecutive NR C4-type zinc fingers follow at residues 31-51 (CVVC…CNGC) and 67-91 (CQFS…LKKC). The NR LBD domain occupies 173-450 (DVKAVIEDLL…LIDQLIIVGL (278 aa)).

It belongs to the nuclear hormone receptor family. As to expression, isoform b: Expressed in body wall muscle cells, pharyngeal muscles, rectal gland cells, vulval and uterine muscles and neurons in the head and ventral nerve cord. Isoform c: Expressed in body wall muscle cells, neurons in the head, nerve ring, ventral and dorsal nerve cords and epidermal cells in the tail.

The protein localises to the nucleus. In terms of biological role, orphan nuclear receptor. Plays a role in morphogenesis and elongation during embryonic and larval development. Plays a role in muscle formation and motility. This is Nuclear hormone receptor family member nhr-40 from Caenorhabditis elegans.